The chain runs to 503 residues: Arabinose import ATP-binding protein AraG 1 (503 aa).

2 ABC transporter domains span residues 5-240 (LRFD…MVGR) and 251-497 (RTLG…LPQT). 37 to 44 (GENGAGKS) serves as a coordination point for ATP.

It belongs to the ABC transporter superfamily. Arabinose importer (TC 3.A.1.2.2) family. In terms of assembly, the complex is composed of two ATP-binding proteins (AraG), two transmembrane proteins (AraH) and a solute-binding protein (AraF).

Its subcellular location is the cell inner membrane. The enzyme catalyses L-arabinose(out) + ATP + H2O = L-arabinose(in) + ADP + phosphate + H(+). Part of the ABC transporter complex AraFGH involved in arabinose import. Responsible for energy coupling to the transport system. This Burkholderia cenocepacia (strain HI2424) protein is Arabinose import ATP-binding protein AraG 1.